The chain runs to 487 residues: 1-aminocyclopropane-1-carboxylate synthase 1 (487 aa).

N6-(pyridoxal phosphate)lysine is present on Lys286.

The protein belongs to the class-I pyridoxal-phosphate-dependent aminotransferase family. Homodimer. Pyridoxal 5'-phosphate is required as a cofactor.

It carries out the reaction S-adenosyl-L-methionine = 1-aminocyclopropane-1-carboxylate + S-methyl-5'-thioadenosine + H(+). It participates in alkene biosynthesis; ethylene biosynthesis via S-adenosyl-L-methionine; ethylene from S-adenosyl-L-methionine: step 1/2. Catalyzes the formation of 1-aminocyclopropane-1-carboxylate, a direct precursor of ethylene in higher plants. This chain is 1-aminocyclopropane-1-carboxylate synthase 1 (ACC1), found in Oryza sativa subsp. indica (Rice).